A 156-amino-acid polypeptide reads, in one-letter code: Ribonuclease H (156 aa).

The region spanning 3–144 is the RNase H type-1 domain; it reads ELKQIRIYTD…CDTLAREAAE (142 aa). The Mg(2+) site is built by D12, E50, D72, and D136.

Belongs to the RNase H family. As to quaternary structure, monomer. Mg(2+) serves as cofactor.

The protein localises to the cytoplasm. It catalyses the reaction Endonucleolytic cleavage to 5'-phosphomonoester.. In terms of biological role, endonuclease that specifically degrades the RNA of RNA-DNA hybrids. The sequence is that of Ribonuclease H from Shewanella amazonensis (strain ATCC BAA-1098 / SB2B).